A 184-amino-acid polypeptide reads, in one-letter code: ATP synthase subunit delta (184 aa).

This sequence belongs to the ATPase delta chain family. In terms of assembly, F-type ATPases have 2 components, F(1) - the catalytic core - and F(0) - the membrane proton channel. F(1) has five subunits: alpha(3), beta(3), gamma(1), delta(1), epsilon(1). F(0) has three main subunits: a(1), b(2) and c(10-14). The alpha and beta chains form an alternating ring which encloses part of the gamma chain. F(1) is attached to F(0) by a central stalk formed by the gamma and epsilon chains, while a peripheral stalk is formed by the delta and b chains.

Its subcellular location is the cell inner membrane. Its function is as follows. F(1)F(0) ATP synthase produces ATP from ADP in the presence of a proton or sodium gradient. F-type ATPases consist of two structural domains, F(1) containing the extramembraneous catalytic core and F(0) containing the membrane proton channel, linked together by a central stalk and a peripheral stalk. During catalysis, ATP synthesis in the catalytic domain of F(1) is coupled via a rotary mechanism of the central stalk subunits to proton translocation. Functionally, this protein is part of the stalk that links CF(0) to CF(1). It either transmits conformational changes from CF(0) to CF(1) or is implicated in proton conduction. The protein is ATP synthase subunit delta of Paramagnetospirillum magneticum (strain ATCC 700264 / AMB-1) (Magnetospirillum magneticum).